The following is a 244-amino-acid chain: Small ribosomal subunit protein uS2m (244 aa).

The protein belongs to the universal ribosomal protein uS2 family.

The protein resides in the mitochondrion. The polypeptide is Small ribosomal subunit protein uS2m (mrps2) (Dictyostelium discoideum (Social amoeba)).